Consider the following 158-residue polypeptide: NAD(P)H-quinone oxidoreductase subunit J, chloroplastic (158 aa).

This sequence belongs to the complex I 30 kDa subunit family. In terms of assembly, NDH is composed of at least 16 different subunits, 5 of which are encoded in the nucleus.

The protein resides in the plastid. It is found in the chloroplast thylakoid membrane. The enzyme catalyses a plastoquinone + NADH + (n+1) H(+)(in) = a plastoquinol + NAD(+) + n H(+)(out). The catalysed reaction is a plastoquinone + NADPH + (n+1) H(+)(in) = a plastoquinol + NADP(+) + n H(+)(out). In terms of biological role, NDH shuttles electrons from NAD(P)H:plastoquinone, via FMN and iron-sulfur (Fe-S) centers, to quinones in the photosynthetic chain and possibly in a chloroplast respiratory chain. The immediate electron acceptor for the enzyme in this species is believed to be plastoquinone. Couples the redox reaction to proton translocation, and thus conserves the redox energy in a proton gradient. The polypeptide is NAD(P)H-quinone oxidoreductase subunit J, chloroplastic (Solanum lycopersicum (Tomato)).